A 250-amino-acid polypeptide reads, in one-letter code: 5'-nucleotidase SurE (250 aa).

A divalent metal cation-binding residues include Asp-8, Asp-9, Ser-39, and Asn-91.

It belongs to the SurE nucleotidase family. Requires a divalent metal cation as cofactor.

The protein resides in the cytoplasm. It carries out the reaction a ribonucleoside 5'-phosphate + H2O = a ribonucleoside + phosphate. Its function is as follows. Nucleotidase that shows phosphatase activity on nucleoside 5'-monophosphates. This Shewanella halifaxensis (strain HAW-EB4) protein is 5'-nucleotidase SurE.